Reading from the N-terminus, the 194-residue chain is Orotate phosphoribosyltransferase (194 aa).

116-124 (EDIVTTGLS) provides a ligand contact to 5-phospho-alpha-D-ribose 1-diphosphate. The orotate site is built by Thr120 and Arg148.

The protein belongs to the purine/pyrimidine phosphoribosyltransferase family. PyrE subfamily. As to quaternary structure, homodimer. Mg(2+) is required as a cofactor.

It catalyses the reaction orotidine 5'-phosphate + diphosphate = orotate + 5-phospho-alpha-D-ribose 1-diphosphate. Its pathway is pyrimidine metabolism; UMP biosynthesis via de novo pathway; UMP from orotate: step 1/2. Catalyzes the transfer of a ribosyl phosphate group from 5-phosphoribose 1-diphosphate to orotate, leading to the formation of orotidine monophosphate (OMP). The polypeptide is Orotate phosphoribosyltransferase (Phenylobacterium zucineum (strain HLK1)).